The following is a 270-amino-acid chain: Formamidopyrimidine-DNA glycosylase (270 aa).

The Schiff-base intermediate with DNA role is filled by proline 2. The Proton donor role is filled by glutamate 3. Catalysis depends on lysine 57, which acts as the Proton donor; for beta-elimination activity. Residues histidine 90, arginine 109, and arginine 151 each contribute to the DNA site. The FPG-type zinc-finger motif lies at 236–270 (QVYGRGGKLCMVCSNRLKEVRLGQRSTVYCTQCQR). Arginine 260 (proton donor; for delta-elimination activity) is an active-site residue.

This sequence belongs to the FPG family. In terms of assembly, monomer. The cofactor is Zn(2+).

It catalyses the reaction Hydrolysis of DNA containing ring-opened 7-methylguanine residues, releasing 2,6-diamino-4-hydroxy-5-(N-methyl)formamidopyrimidine.. The catalysed reaction is 2'-deoxyribonucleotide-(2'-deoxyribose 5'-phosphate)-2'-deoxyribonucleotide-DNA = a 3'-end 2'-deoxyribonucleotide-(2,3-dehydro-2,3-deoxyribose 5'-phosphate)-DNA + a 5'-end 5'-phospho-2'-deoxyribonucleoside-DNA + H(+). Functionally, involved in base excision repair of DNA damaged by oxidation or by mutagenic agents. Acts as a DNA glycosylase that recognizes and removes damaged bases. Has a preference for oxidized purines, such as 7,8-dihydro-8-oxoguanine (8-oxoG). Has AP (apurinic/apyrimidinic) lyase activity and introduces nicks in the DNA strand. Cleaves the DNA backbone by beta-delta elimination to generate a single-strand break at the site of the removed base with both 3'- and 5'-phosphates. This chain is Formamidopyrimidine-DNA glycosylase, found in Idiomarina loihiensis (strain ATCC BAA-735 / DSM 15497 / L2-TR).